A 134-amino-acid chain; its full sequence is TSC22 domain family protein 3 (134 aa).

Residue Met1 is modified to N-acetylmethionine. Positions 1 to 60 are AP1-binding; it reads MNTEMYQTPMEVAVYQLHNFSISFFSSLLGGDVVSVKLDNSASGASVVAIDNKIEQAMDL. Residues Ala42 and Val73 each carry the phosphoserine modification. The interval 76–97 is leucine-zipper; the sequence is LKEQIRELVEKNSQLERENTLL. The residue at position 102 (Ser102) is a Phosphoserine. Residues 108 to 134 form a disordered region; the sequence is KFQSCLSPEEPAPESPQVPEAPGGSAV.

The protein belongs to the TSC-22/Dip/Bun family. As to quaternary structure, can form homodimers, however it is likely to function as a monomer. Interacts with NFKB1. Interacts (via N-terminus) with JUN and FOS; these interactions inhibit the binding of active AP1 to its target DNA. Interacts with MYOD1. Interacts with HDAC1; this interaction affects HDAC1 activity on MYOG promoter and thus inhibits MYOD1 transcriptional activity. Ubiquitously expressed, including in the fetal brain and liver. Expressed in brain, lung, spleen and skeletal muscle. Lower levels detected in heart and kidney. Not detected in the pancreas. In non-lymphoid tissues, in the absence of inflammation, the major source of constitutive expression is the macrophage lineage. Also expressed in cells from different hemopoietic cell lineages, including bone marrow cells, CD34+ stem cells, mature B- and T-cells, monocytes and granulocytes. Down-regulated in activated macrophages from inflammatory lesions of delayed-type hypersensitivity (DTH) reactions, such as in tuberculosis and in Crohn disease, whereas in Burkitt lymphoma, persists in macrophages involved in the phagocytosis of apoptotic malignant cells.

It localises to the cytoplasm. The protein resides in the nucleus. Its function is as follows. Protects T-cells from IL2 deprivation-induced apoptosis through the inhibition of FOXO3A transcriptional activity that leads to the down-regulation of the pro-apoptotic factor BCL2L11. In macrophages, plays a role in the anti-inflammatory and immunosuppressive effects of glucocorticoids and IL10. In T-cells, inhibits anti-CD3-induced NFKB1 nuclear translocation and thereby NFKB1 DNA-binding activities. In vitro, suppresses AP-1 transcription factor complex DNA-binding activities. Inhibits myogenic differentiation and mediates anti-myogenic effects of glucocorticoids by binding and regulating MYOD1 and HDAC1 transcriptional activity resulting in reduced expression of MYOG. This chain is TSC22 domain family protein 3, found in Homo sapiens (Human).